We begin with the raw amino-acid sequence, 203 residues long: Large ribosomal subunit protein bL25 (203 aa).

Residues 1 to 21 (MMENLQVNQREKKTRHSSRQC) form a disordered region. Over residues 12–21 (KKTRHSSRQC) the composition is skewed to basic residues.

Belongs to the bacterial ribosomal protein bL25 family. CTC subfamily. Part of the 50S ribosomal subunit; part of the 5S rRNA/L5/L18/L25 subcomplex. Contacts the 5S rRNA. Binds to the 5S rRNA independently of L5 and L18.

Functionally, this is one of the proteins that binds to the 5S RNA in the ribosome where it forms part of the central protuberance. The protein is Large ribosomal subunit protein bL25 of Clostridium perfringens (strain 13 / Type A).